The primary structure comprises 97 residues: Large ribosomal subunit protein bL31B (97 aa).

It belongs to the bacterial ribosomal protein bL31 family. Type B subfamily. As to quaternary structure, part of the 50S ribosomal subunit.

In Mycolicibacterium paratuberculosis (strain ATCC BAA-968 / K-10) (Mycobacterium paratuberculosis), this protein is Large ribosomal subunit protein bL31B (rpmE2).